Here is a 373-residue protein sequence, read N- to C-terminus: Zn(2)-C6 fungal-type transcription factor afumD (373 aa).

The disordered stretch occupies residues 1 to 48 (MLDRSKMTSAIPDSNSSSSPRGHNQSERDSYNRKKRKGPRLAHRKSRT). Residues 33 to 48 (RKKRKGPRLAHRKSRT) show a composition bias toward basic residues. Positions 50 to 77 (CQRCRARRVKCDESRPVCRDCHRHGIPC) form a DNA-binding region, zn(2)-C6 fungal-type. Positions 86 to 110 (GAIPPSTGIQSRPLEPSPSDPSNDA) are disordered.

The protein localises to the nucleus. Its function is as follows. Zn(2)-C6 fungal-type transcription factor; part of the gene cluster that mediates the biosynthesis fumihopaside A, a hopane-type glucoside that enhances the thermotolerance and UV resistance of N.fumigata. The sequence is that of Zn(2)-C6 fungal-type transcription factor afumD from Aspergillus fumigatus (strain CBS 144.89 / FGSC A1163 / CEA10) (Neosartorya fumigata).